A 20-amino-acid chain; its full sequence is Protein PR-L6 (20 aa).

This sequence belongs to the BetVI family.

In Lupinus luteus (European yellow lupine), this protein is Protein PR-L6.